A 382-amino-acid chain; its full sequence is Homoserine O-acetyltransferase (382 aa).

One can recognise an AB hydrolase-1 domain in the interval 50–360; sequence NAVLICHALT…DKGHDAFLLD (311 aa). The Nucleophile role is filled by Ser155. Arg225 lines the substrate pocket. Catalysis depends on residues Asp321 and His354. Asp355 provides a ligand contact to substrate.

The protein belongs to the AB hydrolase superfamily. MetX family. In terms of assembly, homodimer.

Its subcellular location is the cytoplasm. It carries out the reaction L-homoserine + acetyl-CoA = O-acetyl-L-homoserine + CoA. It functions in the pathway amino-acid biosynthesis; L-methionine biosynthesis via de novo pathway; O-acetyl-L-homoserine from L-homoserine: step 1/1. Functionally, transfers an acetyl group from acetyl-CoA to L-homoserine, forming acetyl-L-homoserine. The polypeptide is Homoserine O-acetyltransferase (Caulobacter vibrioides (strain ATCC 19089 / CIP 103742 / CB 15) (Caulobacter crescentus)).